The following is a 504-amino-acid chain: MSVVSSFHQSWKSLILASQRCNTVKQIKSTHSLFIIHGLHRNTYAISKLLTAFLHLPNLNKHFHYASSIFDSIEIPNSFVYDTMIRICSRSSQPHLGLRYFLLMVKEEEEDIAPSYLTFHFLIVACLKACFFSVGKQIHCWVVKNGVFLSDSHVQTGVLRIYVEDKLLLDARKVFDEIPQPDVVKWDVLMNGYVRCGLGSEGLEVFREMLVKGLEPDEFSVTTALTACAQVGALAQGKWIHEFVKKKSWIESDVFVGTALVDMYAKCGCIETAVEVFKKLTRRNVFSWAALIGGYAAYGYAKKAMTCLERLEREDGIKPDSVVLLGVLAACAHGGFLEEGRSMLENMEARYEITPKHEHYSCIVDLMCRAGRLDDALNLIEKMPMKPLASVWGALLNGCRTHKNVELGELAVKNLLDLEKGNVEEEEAALVQLSNIYFSVQRNPEASKVRGMIEQRGVRKTPGWSVLEVDGNVTKFVSGDVSHPNLLQIHTVIHLLSVDALQIL.

9 PPR repeats span residues 77 to 107 (NSFV…MVKE), 115 to 149 (SYLT…GVFL), 151 to 181 (DSHV…IPQP), 182 to 216 (DVVK…GLEP), 217 to 251 (DEFS…SWIE), 253 to 287 (DVFV…NVFS), 288 to 319 (WAAL…GIKP), 320 to 350 (DSVV…MEAR), and 356 to 390 (KHEH…PLAS). The type E motif stretch occupies residues 391–470 (VWGALLNGCR…TPGWSVLEVD (80 aa)). The interval 471–501 (GNVTKFVSGDVSHPNLLQIHTVIHLLSVDAL) is type E(+) motif.

The protein belongs to the PPR family. PCMP-E subfamily.

This Arabidopsis thaliana (Mouse-ear cress) protein is Putative pentatricopeptide repeat-containing protein At3g28640 (PCMP-E79).